Reading from the N-terminus, the 209-residue chain is MIKVKICGITNLEDALLAVDAGADALGFVFCEASPRSVTPEQAASIIRQLPPFIQTIGLFVNEPLAVINQTADACGLDIVQLHGEEAPQFCAGVKRRVIKALRVRDESSLEPMTSYRVSAFLLDAWSPSAHGGTGRTFNWDIAAGAAAKNRIVLAGGLTADNIAAAIRKVHPYGVDVSSGVEAAPGKKDAVKIREFIRIAKETRSESTR.

The protein belongs to the TrpF family.

The catalysed reaction is N-(5-phospho-beta-D-ribosyl)anthranilate = 1-(2-carboxyphenylamino)-1-deoxy-D-ribulose 5-phosphate. It functions in the pathway amino-acid biosynthesis; L-tryptophan biosynthesis; L-tryptophan from chorismate: step 3/5. The chain is N-(5'-phosphoribosyl)anthranilate isomerase from Pelobacter propionicus (strain DSM 2379 / NBRC 103807 / OttBd1).